The following is a 421-amino-acid chain: Tyrosine--tRNA ligase (421 aa).

Position 38 (Tyr-38) interacts with L-tyrosine. Positions 43–52 match the 'HIGH' region motif; that stretch reads PTGDSLHIGH. Residues Tyr-169 and Gln-173 each coordinate L-tyrosine. The 'KMSKS' region signature appears at 231 to 235; sequence KFGKS. Lys-234 contributes to the ATP binding site. The 67-residue stretch at 353–419 folds into the S4 RNA-binding domain; it reads KNLVDFLVDT…GKKKYTLVHI (67 aa).

It belongs to the class-I aminoacyl-tRNA synthetase family. TyrS type 1 subfamily. In terms of assembly, homodimer.

It is found in the cytoplasm. It catalyses the reaction tRNA(Tyr) + L-tyrosine + ATP = L-tyrosyl-tRNA(Tyr) + AMP + diphosphate + H(+). Catalyzes the attachment of tyrosine to tRNA(Tyr) in a two-step reaction: tyrosine is first activated by ATP to form Tyr-AMP and then transferred to the acceptor end of tRNA(Tyr). In Lactobacillus delbrueckii subsp. bulgaricus (strain ATCC BAA-365 / Lb-18), this protein is Tyrosine--tRNA ligase.